A 639-amino-acid polypeptide reads, in one-letter code: Alpha-dioxygenase 1 (639 aa).

Catalysis depends on His-163, which acts as the Proton acceptor. A Ca(2+)-binding site is contributed by Asp-164. His-168 is a binding site for heme b. Ca(2+) contacts are provided by Thr-216, Trp-218, Asp-220, and Ser-222. Residues His-389, Arg-486, and Arg-490 each contribute to the heme b site.

This sequence belongs to the peroxidase family. In terms of assembly, forms monomers in solution. Heme b is required as a cofactor. The cofactor is Ca(2+). In terms of tissue distribution, expressed in roots (epiderm), mature flowers (e.g. anthers) and senescing leaves.

It is found in the lipid droplet. It catalyses the reaction a 1,2-saturated fatty acid + O2 = a (2R)-2-hydroperoxy fatty acid. It carries out the reaction (9Z,12Z,15Z)-octadecatrienoate + O2 = (R)-2-hydroperoxy-(9Z,12Z,15Z)-octadecatrienoate. The catalysed reaction is hexadecanoate + O2 = (2R)-2-hydroperoxyhexadecanoate. The enzyme catalyses (9Z,12Z)-octadecadienoate + O2 = (2R,9Z,12Z)-2-hydroperoxyoctadecadienoate. It catalyses the reaction (9Z)-octadecenoate + O2 = (2R,9Z)-2-hydroperoxyoctadecenoate. Functionally, alpha-dioxygenase that catalyzes the primary oxygenation step of a variety of 14-20 carbon fatty acids, containing up to three unsaturated bonds, into their corresponding 2R-hydroperoxides. Involved in the production of oxylipins that function in cell signaling, wound healing, and protection from infection. Mediates protection against oxidative stress and cell death, probably by generating some lipid-derived molecules. Promotes local and systemic plant defense in a salicylic acid (SA)-dependent manner, including the establishment of systemic acquired resistance (SAR) in response to incompatible interaction. Involved in a negative regulation of abscisic acid (ABA)-mediated signaling pathway. This chain is Alpha-dioxygenase 1, found in Arabidopsis thaliana (Mouse-ear cress).